Consider the following 599-residue polypeptide: Laccase-15 (599 aa).

Positions 1 to 29 (MKRCQSSRPTAAVAAVVAAVSMIIVLVSG) are cleaved as a signal peptide. Plastocyanin-like domains follow at residues 46 to 162 (VVSQ…PRHG) and 173 to 328 (REVP…YSSN). N-linked (GlcNAc...) asparagine glycosylation is found at Asn51 and Asn92. Positions 96 and 98 each coordinate Cu cation. N-linked (GlcNAc...) asparagine glycosylation is present at Asn124. Cu cation-binding residues include His141 and His143. N-linked (GlcNAc...) asparagine glycans are attached at residues Asn193, Asn217, Asn331, Asn355, Asn412, and Asn454. One can recognise a Plastocyanin-like 3 domain in the interval 444–586 (ELAERPPRAY…AAVFIVEDGP (143 aa)). Cu cation is bound by residues Asn503, His506, His508, His565, Cys566, His567, His571, and Met576.

This sequence belongs to the multicopper oxidase family. The cofactor is Cu cation.

The protein localises to the secreted. It is found in the extracellular space. It localises to the apoplast. The enzyme catalyses 4 hydroquinone + O2 = 4 benzosemiquinone + 2 H2O. Functionally, lignin degradation and detoxification of lignin-derived products. This chain is Laccase-15 (LAC15), found in Oryza sativa subsp. japonica (Rice).